The chain runs to 520 residues: 2-isopropylmalate synthase (520 aa).

Residues 12-274 (IRIFDTTLRD…DSAINTPRIV (263 aa)) form the Pyruvate carboxyltransferase domain. The Mn(2+) site is built by Asp21, His209, His211, and Asn245. The regulatory domain stretch occupies residues 396 to 520 (RLASMTISDV…VIAGKTAAVA (125 aa)).

The protein belongs to the alpha-IPM synthase/homocitrate synthase family. LeuA type 1 subfamily. In terms of assembly, homodimer. The cofactor is Mn(2+).

Its subcellular location is the cytoplasm. The catalysed reaction is 3-methyl-2-oxobutanoate + acetyl-CoA + H2O = (2S)-2-isopropylmalate + CoA + H(+). It functions in the pathway amino-acid biosynthesis; L-leucine biosynthesis; L-leucine from 3-methyl-2-oxobutanoate: step 1/4. Its function is as follows. Catalyzes the condensation of the acetyl group of acetyl-CoA with 3-methyl-2-oxobutanoate (2-ketoisovalerate) to form 3-carboxy-3-hydroxy-4-methylpentanoate (2-isopropylmalate). The polypeptide is 2-isopropylmalate synthase (Xanthomonas oryzae pv. oryzae (strain MAFF 311018)).